The primary structure comprises 503 residues: MDVVARFMVSYSGTACAISLFIFGITLLFPFHKSQSFVCMNSHSWDIFRNKAKREFESNAEKLIKDALRKGLTAFQLVTNMGTYLILADQYAEELRNDKRLSAYDALNDVILLELPGLETMFQGSLHNHVSPTAIHAMNRELVHLTRALSDEANHRLQTQWTDSSEWHTVSIHDTVLALVAQMTTRAFVGAELCRNAEWLDIAINFTINRAIAVQAVQAWPWILQPVVHWFLPTCKAVRRQIQRARTILMPVLERERQTMHRKDSSSDRIFSTLTFIDQYAQGSRYDATMAQLRLTAVSVLTTSDMVEKVLARICEHPELIQPLREEVVSVFESSGLHHKSLLKLTLMESVMKESQRLEPATLISMFRAAKKTVTLQDGTTIPKGTRLAFANDLRLDPELYPDPETFDGYRFERMRKDPEQAKLAPFTKTRTSHLAFGHGKHACPGRFLSCDEAKLILCHILLKYDFKALDGRVPDLHVRSMFIQRDTGGMLSVRRRQEEVTL.

The helical transmembrane segment at 11-31 (YSGTACAISLFIFGITLLFPF) threads the bilayer. Asparagine 205 carries an N-linked (GlcNAc...) asparagine glycan. A heme-binding site is contributed by cysteine 444.

It belongs to the cytochrome P450 family. Requires heme as cofactor.

The protein resides in the membrane. Its pathway is alkaloid biosynthesis. Its function is as follows. Cytochrome P450 monooxygenase; part of the gene cluster that mediates the biosynthesis of the mycotoxin meleagrin. The first stage is catalyzed by the dipeptide synthase roqA which condenses histidine and tryptophan to produce histidyltryptophanyldiketopiperazine (HTD). HTD is then converted to roquefortine C through two possible pathways. In the first pathway, prenyltransferase roqD transforms HTD to the intermediate roquefortine D, which is in turn converted to roquefortine C by the cytochrome P450 monooxygenase roqR. In the second pathway, HTD is first converted to the intermediate dehydrohistidyltryptophanyldi-ketopiperazine (DHTD) by roqR which is then prenylated by roqD to form roquefortine C. Roquefortine C can be further transformed to meleagrin via three more reactions including oxydation to glandicolin A by roqM, which is further reduced to glandicoline B by roqO. Finally, glandicoline B is converted to meleagrin by the glandicoline B O-methyltransferase roqN. More studies identified further branching and additional metabolites produced by the roquefortine/meleagrin cluster, including roquefortine F, roquefortine L, roquefortine M, roquefortine N and neoxaline. The sequence is that of Cytochrome P450 monooxygenase roqO from Penicillium rubens (strain ATCC 28089 / DSM 1075 / NRRL 1951 / Wisconsin 54-1255) (Penicillium chrysogenum).